Reading from the N-terminus, the 362-residue chain is Isopentenyl-diphosphate delta-isomerase (362 aa).

6-7 (RK) is a binding site for substrate. Residues 65–67 (SIT), serine 95, and asparagine 124 contribute to the FMN site. Residue 95-97 (SQR) participates in substrate binding. Residue glutamine 158 participates in substrate binding. Position 159 (glutamate 159) interacts with Mg(2+). FMN-binding positions include lysine 189, threonine 219, 269–271 (GVR), and 290–291 (AL).

Belongs to the IPP isomerase type 2 family. Homooctamer. Dimer of tetramers. FMN is required as a cofactor. It depends on NADPH as a cofactor. The cofactor is Mg(2+).

The protein localises to the cytoplasm. It carries out the reaction isopentenyl diphosphate = dimethylallyl diphosphate. In terms of biological role, involved in the biosynthesis of isoprenoids. Catalyzes the 1,3-allylic rearrangement of the homoallylic substrate isopentenyl (IPP) to its allylic isomer, dimethylallyl diphosphate (DMAPP). The chain is Isopentenyl-diphosphate delta-isomerase from Methanococcoides burtonii (strain DSM 6242 / NBRC 107633 / OCM 468 / ACE-M).